We begin with the raw amino-acid sequence, 464 residues long: Protein FAM90A7 (464 aa).

Disordered regions lie at residues 1–42, 69–387, and 410–437; these read MMAR…DPRL, VPAT…AGHD, and AAPS…SEAP. Composition is skewed to basic and acidic residues over residues 74–89 and 97–111; these read GKKE…KPRA and NKDK…RQQD. Low complexity predominate over residues 180–197; sequence LASLSPLRKASLSSSSSL.

The protein belongs to the FAM90 family.

The polypeptide is Protein FAM90A7 (Homo sapiens (Human)).